The primary structure comprises 174 residues: Crossover junction endodeoxyribonuclease RuvC (174 aa).

Residues D8, E67, and D139 contribute to the active site. Residues D8, E67, and D139 each contribute to the Mg(2+) site.

The protein belongs to the RuvC family. In terms of assembly, homodimer which binds Holliday junction (HJ) DNA. The HJ becomes 2-fold symmetrical on binding to RuvC with unstacked arms; it has a different conformation from HJ DNA in complex with RuvA. In the full resolvosome a probable DNA-RuvA(4)-RuvB(12)-RuvC(2) complex forms which resolves the HJ. Requires Mg(2+) as cofactor.

The protein localises to the cytoplasm. It carries out the reaction Endonucleolytic cleavage at a junction such as a reciprocal single-stranded crossover between two homologous DNA duplexes (Holliday junction).. In terms of biological role, the RuvA-RuvB-RuvC complex processes Holliday junction (HJ) DNA during genetic recombination and DNA repair. Endonuclease that resolves HJ intermediates. Cleaves cruciform DNA by making single-stranded nicks across the HJ at symmetrical positions within the homologous arms, yielding a 5'-phosphate and a 3'-hydroxyl group; requires a central core of homology in the junction. The consensus cleavage sequence is 5'-(A/T)TT(C/G)-3'. Cleavage occurs on the 3'-side of the TT dinucleotide at the point of strand exchange. HJ branch migration catalyzed by RuvA-RuvB allows RuvC to scan DNA until it finds its consensus sequence, where it cleaves and resolves the cruciform DNA. This is Crossover junction endodeoxyribonuclease RuvC from Pseudomonas savastanoi pv. phaseolicola (strain 1448A / Race 6) (Pseudomonas syringae pv. phaseolicola (strain 1448A / Race 6)).